The primary structure comprises 537 residues: 5,6-dihydroxyindole-2-carboxylic acid oxidase (537 aa).

The N-terminal stretch at methionine 1–alanine 24 is a signal peptide. Residues glutamine 25–glutamate 477 lie on the Lumenal, melanosome side of the membrane. Disulfide bonds link cysteine 30/cysteine 41, cysteine 42/cysteine 65, cysteine 56/cysteine 99, cysteine 101/cysteine 110, and cysteine 113/cysteine 122. Asparagine 96 and asparagine 104 each carry an N-linked (GlcNAc...) asparagine glycan. An N-linked (GlcNAc...) asparagine glycan is attached at asparagine 181. The Zn(2+) site is built by histidine 192, histidine 215, and histidine 224. Disulfide bonds link cysteine 258-cysteine 261 and cysteine 290-cysteine 303. N-linked (GlcNAc...) asparagine glycosylation is found at asparagine 304 and asparagine 350. Zn(2+) is bound by residues histidine 377 and histidine 381. Asparagine 385 is a glycosylation site (N-linked (GlcNAc...) asparagine). Zn(2+) is bound at residue histidine 404. The helical transmembrane segment at isoleucine 478–isoleucine 501 threads the bilayer. At arginine 502–valine 537 the chain is on the cytoplasmic side.

It belongs to the tyrosinase family. In terms of assembly, monomer. Interacts with ATP7A. Interacts with SLC45A2. Cu(2+) serves as cofactor. It depends on Zn(2+) as a cofactor. Post-translationally, glycosylated.

Its subcellular location is the melanosome membrane. It carries out the reaction 2 5,6-dihydroxyindole-2-carboxylate + O2 = 2 indole-5,6-quinone-2-carboxylate + 2 H2O. It functions in the pathway pigment biosynthesis; melanin biosynthesis. Its function is as follows. Plays a role in melanin biosynthesis. Catalyzes the oxidation of 5,6-dihydroxyindole-2-carboxylic acid (DHICA) into indole-5,6-quinone-2-carboxylic acid. May regulate or influence the type of melanin synthesized. Also to a lower extent, capable of hydroxylating tyrosine and producing melanin. This Bos taurus (Bovine) protein is 5,6-dihydroxyindole-2-carboxylic acid oxidase (TYRP1).